A 464-amino-acid polypeptide reads, in one-letter code: Cysteine--tRNA ligase (464 aa).

Residue Cys-27 participates in Zn(2+) binding. The short motif at 29 to 39 (PTVYNFFHIGN) is the 'HIGH' region element. Zn(2+) contacts are provided by Cys-207, His-232, and Glu-236. Residues 264–268 (KMSKS) carry the 'KMSKS' region motif. Lys-267 contacts ATP.

Belongs to the class-I aminoacyl-tRNA synthetase family. In terms of assembly, monomer. Zn(2+) serves as cofactor.

It is found in the cytoplasm. The catalysed reaction is tRNA(Cys) + L-cysteine + ATP = L-cysteinyl-tRNA(Cys) + AMP + diphosphate. This chain is Cysteine--tRNA ligase, found in Clostridium acetobutylicum (strain ATCC 824 / DSM 792 / JCM 1419 / IAM 19013 / LMG 5710 / NBRC 13948 / NRRL B-527 / VKM B-1787 / 2291 / W).